The primary structure comprises 310 residues: Porphobilinogen deaminase (310 aa).

At C241 the chain carries S-(dipyrrolylmethanemethyl)cysteine.

It belongs to the HMBS family. In terms of assembly, monomer. It depends on dipyrromethane as a cofactor.

It carries out the reaction 4 porphobilinogen + H2O = hydroxymethylbilane + 4 NH4(+). It functions in the pathway porphyrin-containing compound metabolism; protoporphyrin-IX biosynthesis; coproporphyrinogen-III from 5-aminolevulinate: step 2/4. Functionally, tetrapolymerization of the monopyrrole PBG into the hydroxymethylbilane pre-uroporphyrinogen in several discrete steps. The polypeptide is Porphobilinogen deaminase (Pelobacter propionicus (strain DSM 2379 / NBRC 103807 / OttBd1)).